Reading from the N-terminus, the 103-residue chain is Large ribosomal subunit protein uL24 (103 aa).

Belongs to the universal ribosomal protein uL24 family. As to quaternary structure, part of the 50S ribosomal subunit.

Its function is as follows. One of two assembly initiator proteins, it binds directly to the 5'-end of the 23S rRNA, where it nucleates assembly of the 50S subunit. One of the proteins that surrounds the polypeptide exit tunnel on the outside of the subunit. The polypeptide is Large ribosomal subunit protein uL24 (Haemophilus influenzae (strain 86-028NP)).